The primary structure comprises 304 residues: Glycine--tRNA ligase alpha subunit (304 aa).

Belongs to the class-II aminoacyl-tRNA synthetase family. Tetramer of two alpha and two beta subunits.

The protein resides in the cytoplasm. It catalyses the reaction tRNA(Gly) + glycine + ATP = glycyl-tRNA(Gly) + AMP + diphosphate. This Yersinia enterocolitica serotype O:8 / biotype 1B (strain NCTC 13174 / 8081) protein is Glycine--tRNA ligase alpha subunit.